The following is a 261-amino-acid chain: Cytochrome c oxidase subunit 3 (261 aa).

6 helical membrane passes run 31 to 51 (LVLWFHTGNIILLFTGLLLLI), 82 to 102 (PMILFITSEVCFFFAFFWAFF), 126 to 146 (PFLVPLLNTAVLLSSGVTITW), 159 to 179 (AIQALFLTVVLGIYFTILQAW), 197 to 217 (FFVATGFHGLHVIIGTTFLLV), and 239 to 259 (AWYWHFVDVVWLFLYVCIYWW).

This sequence belongs to the cytochrome c oxidase subunit 3 family. In terms of assembly, component of the cytochrome c oxidase (complex IV, CIV), a multisubunit enzyme composed of a catalytic core of 3 subunits and several supernumerary subunits. The complex exists as a monomer or a dimer and forms supercomplexes (SCs) in the inner mitochondrial membrane with ubiquinol-cytochrome c oxidoreductase (cytochrome b-c1 complex, complex III, CIII).

The protein resides in the mitochondrion inner membrane. It catalyses the reaction 4 Fe(II)-[cytochrome c] + O2 + 8 H(+)(in) = 4 Fe(III)-[cytochrome c] + 2 H2O + 4 H(+)(out). Functionally, component of the cytochrome c oxidase, the last enzyme in the mitochondrial electron transport chain which drives oxidative phosphorylation. The respiratory chain contains 3 multisubunit complexes succinate dehydrogenase (complex II, CII), ubiquinol-cytochrome c oxidoreductase (cytochrome b-c1 complex, complex III, CIII) and cytochrome c oxidase (complex IV, CIV), that cooperate to transfer electrons derived from NADH and succinate to molecular oxygen, creating an electrochemical gradient over the inner membrane that drives transmembrane transport and the ATP synthase. Cytochrome c oxidase is the component of the respiratory chain that catalyzes the reduction of oxygen to water. Electrons originating from reduced cytochrome c in the intermembrane space (IMS) are transferred via the dinuclear copper A center (CU(A)) of subunit 2 and heme A of subunit 1 to the active site in subunit 1, a binuclear center (BNC) formed by heme A3 and copper B (CU(B)). The BNC reduces molecular oxygen to 2 water molecules using 4 electrons from cytochrome c in the IMS and 4 protons from the mitochondrial matrix. The chain is Cytochrome c oxidase subunit 3 (COIII) from Paracentrotus lividus (Common sea urchin).